The chain runs to 416 residues: Thyroid hormone receptor alpha-A (416 aa).

Polar residues predominate over residues 1–13 (MEPMSNKQDSNSS). The disordered stretch occupies residues 1–37 (MEPMSNKQDSNSSEGDEKGWPDVPKRKRKNSQCSMKS). Positions 1–58 (MEPMSNKQDSNSSEGDEKGWPDVPKRKRKNSQCSMKSMSALSVSVPGYIPSYLEKDEP) are modulating. A compositionally biased stretch (basic and acidic residues) spans 15-24 (GDEKGWPDVP). 2 consecutive NR C4-type zinc fingers follow at residues 59–79 (CVVCGDKATGYHYRCITCEGC) and 97–121 (CKYEGCCIIDKITRNQCQLCRFKKC). The nuclear receptor DNA-binding region spans 59–126 (CVVCGDKATG…RFKKCISVGM (68 aa)). Residues 169 to 413 (AEWELIRMAT…PPLFLEVFED (245 aa)) enclose the NR LBD domain.

Belongs to the nuclear hormone receptor family. NR1 subfamily.

It localises to the nucleus. Its function is as follows. High affinity receptor for triiodothyronine. This chain is Thyroid hormone receptor alpha-A (thra1), found in Paralichthys olivaceus (Bastard halibut).